Reading from the N-terminus, the 358-residue chain is Probable D-xylulose reductase A (358 aa).

Zn(2+) is bound by residues C47, H72, and E73. Residue 182–187 (GAGPVG) participates in NAD(+) binding.

Belongs to the zinc-containing alcohol dehydrogenase family. Zn(2+) is required as a cofactor.

It carries out the reaction xylitol + NAD(+) = D-xylulose + NADH + H(+). The protein operates within carbohydrate degradation; L-arabinose degradation via L-arabinitol; D-xylulose 5-phosphate from L-arabinose (fungal route): step 4/5. In terms of biological role, xylitol dehydrogenase which catalyzes the conversion of xylitol to D-xylulose. Xylose is a major component of hemicelluloses such as xylan. Most fungi utilize D-xylose via three enzymatic reactions, xylose reductase (XR), xylitol dehydrogenase (XDH), and xylulokinase, to form xylulose 5-phosphate, which enters pentose phosphate pathway. In Aspergillus niger (strain ATCC MYA-4892 / CBS 513.88 / FGSC A1513), this protein is Probable D-xylulose reductase A (xdhA).